A 271-amino-acid chain; its full sequence is MTRWARVSTTYNKRPLPATSWEDMKKGSFEGTSQNLPKRKQLEANRLSLKNDAPQAKHKKNKKKKEYLNEDVNGFMEYLRQNSQMVHNGQIIATDSEEVREEIAVALKKDSRREGRRLKRQAAKKNAMVCFHCRKPGHGIADCPAALENQDMGTGICYRCGSTEHEITKCKAKVDPALGEFPFAKCFVCGEMGHLSRSCPDNPKGLYADGGGCKLCGSVEHLKKDCPESQNSERMVTVGRWAKGMSADYEEILDVPKPQKPKTKIPKVVNF.

The disordered stretch occupies residues 1 to 40 (MTRWARVSTTYNKRPLPATSWEDMKKGSFEGTSQNLPKRK). Serine 48 carries the phosphoserine modification. 4 consecutive CCHC-type zinc fingers follow at residues 128–145 (MVCF…DCPA), 155–172 (GICY…KCKA), 184–201 (AKCF…SCPD), and 211–228 (GGCK…DCPE).

The protein resides in the nucleus. It localises to the nucleolus. May down-regulate transcription mediated by NF-kappa-B and the serum response element. The sequence is that of Zinc finger CCHC domain-containing protein 9 (ZCCHC9) from Homo sapiens (Human).